The primary structure comprises 289 residues: Caffeoylpyruvate hydrolase (289 aa).

Residues glutamate 140, glutamate 142, and aspartate 171 each contribute to the a divalent metal cation site.

This sequence belongs to the FAH family. As to quaternary structure, homodimer. Requires Mg(2+) as cofactor. Mn(2+) is required as a cofactor.

The enzyme catalyses (E)-caffeoylpyruvate + H2O = (E)-caffeate + pyruvate + H(+). Its pathway is secondary metabolite biosynthesis. Functionally, caffeoylpyruvate hydrolase; part of the gene cluster that mediates the fungal bioluminescence cycle. Involved in the recycling of oxyluciferin, a pyruvic acid adduct of caffeic acid, to caffeic acid. The fungal bioluminescence cycle begins with the hispidin synthetase that catalyzes the formation of hispidin which is further hydroxylated by the hispidin-3-hydroxylase, yielding the fungal luciferin 3-hydroxyhispidin. The luciferase then produces an endoperoxide as a high-energy intermediate with decomposition that yields oxyluciferin (also known as caffeoylpyruvate) and light emission. Oxyluciferin can be recycled to caffeic acid by caffeoylpyruvate hydrolase. This chain is Caffeoylpyruvate hydrolase, found in Neonothopanus nambi (Agaricus nambi).